The following is a 292-amino-acid chain: Homoserine kinase (292 aa).

84 to 94 (PLSRGLGSSSA) lines the ATP pocket.

The protein belongs to the GHMP kinase family. Homoserine kinase subfamily.

Its subcellular location is the cytoplasm. The enzyme catalyses L-homoserine + ATP = O-phospho-L-homoserine + ADP + H(+). It functions in the pathway amino-acid biosynthesis; L-threonine biosynthesis; L-threonine from L-aspartate: step 4/5. Functionally, catalyzes the ATP-dependent phosphorylation of L-homoserine to L-homoserine phosphate. In Campylobacter jejuni subsp. jejuni serotype O:6 (strain 81116 / NCTC 11828), this protein is Homoserine kinase.